Consider the following 291-residue polypeptide: N-acetylmannosamine kinase (291 aa).

Residues 5 to 12 (AIDIGGTK) and 132 to 139 (GVGGGVVS) contribute to the ATP site. Residues His-156, Cys-166, Cys-168, and Cys-173 each coordinate Zn(2+).

Belongs to the ROK (NagC/XylR) family. NanK subfamily. As to quaternary structure, homodimer.

The enzyme catalyses an N-acyl-D-mannosamine + ATP = an N-acyl-D-mannosamine 6-phosphate + ADP + H(+). The protein operates within amino-sugar metabolism; N-acetylneuraminate degradation; D-fructose 6-phosphate from N-acetylneuraminate: step 2/5. Its function is as follows. Catalyzes the phosphorylation of N-acetylmannosamine (ManNAc) to ManNAc-6-P. The sequence is that of N-acetylmannosamine kinase from Escherichia fergusonii (strain ATCC 35469 / DSM 13698 / CCUG 18766 / IAM 14443 / JCM 21226 / LMG 7866 / NBRC 102419 / NCTC 12128 / CDC 0568-73).